We begin with the raw amino-acid sequence, 859 residues long: Kinesin-like protein KIN-14T (859 aa).

The 321-residue stretch at 91-411 folds into the Kinesin motor domain; sequence NIRVFCRVKP…LNFATRAKNI (321 aa). 168-175 contributes to the ATP binding site; sequence GQTGTGKT. Positions 422–463 form a coiled coil; that stretch reads QAKKEAVMMNLQKMMEKIEQEREMSLRKMRNLNETLEKLTGK. The disordered stretch occupies residues 511-530; sequence LSGADFSVTPNSSSFKSRRN. A compositionally biased stretch (polar residues) spans 518–530; that stretch reads VTPNSSSFKSRRN.

It belongs to the TRAFAC class myosin-kinesin ATPase superfamily. Kinesin family. KIN-14 subfamily.

The chain is Kinesin-like protein KIN-14T from Arabidopsis thaliana (Mouse-ear cress).